The primary structure comprises 882 residues: Alanine--tRNA ligase (882 aa).

Zn(2+) contacts are provided by histidine 574, histidine 578, cysteine 682, and histidine 686. The interval 853–882 (GGRGGGKGALAQGGGLDPRKAREALPGLLP) is disordered. A compositionally biased stretch (gly residues) spans 854–868 (GRGGGKGALAQGGGL).

Belongs to the class-II aminoacyl-tRNA synthetase family. The cofactor is Zn(2+).

It is found in the cytoplasm. The enzyme catalyses tRNA(Ala) + L-alanine + ATP = L-alanyl-tRNA(Ala) + AMP + diphosphate. Its function is as follows. Catalyzes the attachment of alanine to tRNA(Ala) in a two-step reaction: alanine is first activated by ATP to form Ala-AMP and then transferred to the acceptor end of tRNA(Ala). Also edits incorrectly charged Ser-tRNA(Ala) and Gly-tRNA(Ala) via its editing domain. The chain is Alanine--tRNA ligase from Thermus thermophilus (strain ATCC BAA-163 / DSM 7039 / HB27).